A 547-amino-acid chain; its full sequence is Chaperonin GroEL (547 aa).

ATP-binding positions include 30–33 (TLGP), lysine 51, 87–91 (DGTTT), glycine 415, 479–481 (NAA), and aspartate 495.

Belongs to the chaperonin (HSP60) family. Forms a cylinder of 14 subunits composed of two heptameric rings stacked back-to-back. Interacts with the co-chaperonin GroES.

The protein localises to the cytoplasm. The catalysed reaction is ATP + H2O + a folded polypeptide = ADP + phosphate + an unfolded polypeptide.. Together with its co-chaperonin GroES, plays an essential role in assisting protein folding. The GroEL-GroES system forms a nano-cage that allows encapsulation of the non-native substrate proteins and provides a physical environment optimized to promote and accelerate protein folding. The polypeptide is Chaperonin GroEL (Pseudomonas paraeruginosa (strain DSM 24068 / PA7) (Pseudomonas aeruginosa (strain PA7))).